The primary structure comprises 204 residues: Colicin-A (204 aa).

Transmembrane regions (helical) follow at residues 139-161 (SWVL…LGAY) and 165-187 (LGVP…GALI).

It belongs to the channel forming colicin family.

The protein localises to the cell membrane. This colicin is a channel-forming colicin. This class of transmembrane toxins depolarize the cytoplasmic membrane, leading to dissipation of cellular energy. In terms of biological role, colicins are polypeptide toxins produced by and active against E.coli and closely related bacteria. This is Colicin-A (caa) from Escherichia coli.